The following is a 434-amino-acid chain: D-amino acid dehydrogenase (434 aa).

3-17 (VIVLGSGVIGTTTAY) contributes to the FAD binding site.

This sequence belongs to the DadA oxidoreductase family. FAD is required as a cofactor.

The enzyme catalyses a D-alpha-amino acid + A + H2O = a 2-oxocarboxylate + AH2 + NH4(+). Oxidative deamination of D-amino acids. The sequence is that of D-amino acid dehydrogenase from Bordetella bronchiseptica (strain ATCC BAA-588 / NCTC 13252 / RB50) (Alcaligenes bronchisepticus).